Reading from the N-terminus, the 490-residue chain is MNFGFLGTILTILLVVGFITNVVLAFVIIFLERDRRTASSTWAWLFVLFVLPVIGFILYLFLGRTVSKKKMEKNNGDELNAFEDLVQDQIDSFDKHNYGYINDQVIKHRDLIRMLLMKQDAFLTENNKIDLFTDGHKLYEKVLEDIYNAQDYIHLEYYTFELDGLGKRILDALETKLKEGLEVKLLYDDVGSKKVRLSKFKHFRALGGEVEAFFPSKVPLINFRMNNRNHRKIIIIDGQIGYVGGFNVGDDYLGLGKLGYWRDTHTRVQGEGIDALQLRFILDWNSQSHRPQFKFDQKYFPKKIGDKGNAAIQIASSGPAFDLHQIEYGYTKMIMSAKKSIYLQSPYFIPDQSYINALKMAANSGVEVNLMIPCKPDHPFVYWATFSNAADLLDSGVNIYTYQNGFIHSKILMIDDEISSIGSANMDFRSFELNFEVNAFIYDEDIAKQLRQAFEKDIEQSKLLTKEVYDKRPLSIKFKEGLAKLISPIL.

Transmembrane regions (helical) follow at residues 9–29 and 42–62; these read ILTILLVVGFITNVVLAFVII and WAWLFVLFVLPVIGFILYLFL. 2 PLD phosphodiesterase domains span residues 225–252 and 403–430; these read MNNRNHRKIIIIDGQIGYVGGFNVGDDY and QNGFIHSKILMIDDEISSIGSANMDFRS. Active-site residues include His230, Lys232, Asp237, His408, Lys410, and Asp415.

Belongs to the phospholipase D family. Cardiolipin synthase subfamily.

It localises to the cell membrane. It carries out the reaction 2 a 1,2-diacyl-sn-glycero-3-phospho-(1'-sn-glycerol) = a cardiolipin + glycerol. Functionally, catalyzes the reversible phosphatidyl group transfer from one phosphatidylglycerol molecule to another to form cardiolipin (CL) (diphosphatidylglycerol) and glycerol. This chain is Cardiolipin synthase 1 (cls1), found in Staphylococcus epidermidis (strain ATCC 12228 / FDA PCI 1200).